Here is a 66-residue protein sequence, read N- to C-terminus: Potassium channel toxin alpha-KTx 30.3 (66 aa).

Residues 1-24 (MNKTFFLVVIMATVLVLAFDATDA) form the signal peptide. Disulfide bonds link C30-C50, C36-C55, and C40-C57.

The protein belongs to the short scorpion toxin superfamily. Potassium channel inhibitor family. Alpha-KTx 30 subfamily. Expressed by the venom gland.

The protein localises to the secreted. In terms of biological role, inhibits Kv1.3/KCNA3 channel. The chain is Potassium channel toxin alpha-KTx 30.3 from Scorpiops jendeki (Scorpion).